The following is a 359-amino-acid chain: Innexin inx2 (359 aa).

The Cytoplasmic segment spans residues M1–N22. Residues L23–T43 form a helical membrane-spanning segment. The Extracellular portion of the chain corresponds to S44 to Y109. Residues Q110 to W130 form a helical membrane-spanning segment. Residues K131–F180 are Cytoplasmic-facing. Residues F181–F201 form a helical membrane-spanning segment. Residues L202–K266 are Extracellular-facing. A helical transmembrane segment spans residues I267–V287. At Y288–V359 the chain is on the cytoplasmic side.

The protein belongs to the pannexin family. Widespread expression in embryo, in anterior and posterior row of neural precursors, midline precursors and in epithelial sheet of stomodeum.

Its subcellular location is the cell membrane. The protein localises to the cell junction. It localises to the gap junction. In terms of biological role, structural components of the gap junctions. This Schistocerca americana (American grasshopper) protein is Innexin inx2 (inx2).